A 381-amino-acid polypeptide reads, in one-letter code: Sulfite reductase, dissimilatory-type subunit beta (381 aa).

8 residues coordinate [4Fe-4S] cluster: Cys151, Cys188, Cys189, Cys193, Cys231, Cys258, Cys261, and Cys264. Siroheme is bound at residue Cys193. One can recognise a 4Fe-4S ferredoxin-type domain in the interval 249–276 (NTIAIKNERCMYCGNCYTMCPALPISDG).

As to quaternary structure, heterohexamer of two alpha, two beta and two gamma subunits. The cofactor is [4Fe-4S] cluster. Siroheme serves as cofactor.

It catalyses the reaction [DsrC protein]-trisulfide + NAD(+) + 3 H2O = [DsrC protein]-dithiol + sulfite + NADH + 3 H(+). In terms of biological role, catalyzes the reduction of sulfite to sulfide. This is the terminal oxidation reaction in sulfate respiration, a process catalyzed by the sulfate-reducing bacteria. The chain is Sulfite reductase, dissimilatory-type subunit beta (dsvB) from Nitratidesulfovibrio vulgaris (strain ATCC 29579 / DSM 644 / CCUG 34227 / NCIMB 8303 / VKM B-1760 / Hildenborough) (Desulfovibrio vulgaris).